Reading from the N-terminus, the 522-residue chain is Maturase K (522 aa).

This sequence belongs to the intron maturase 2 family. MatK subfamily.

The protein localises to the plastid. It localises to the chloroplast. Its function is as follows. Usually encoded in the trnK tRNA gene intron. Probably assists in splicing its own and other chloroplast group II introns. This is Maturase K from Iris orientalis (Yellowband iris).